A 157-amino-acid chain; its full sequence is Small ribosomal subunit protein uS7 (157 aa).

Belongs to the universal ribosomal protein uS7 family. Part of the 30S ribosomal subunit. Contacts proteins S9 and S11.

Its function is as follows. One of the primary rRNA binding proteins, it binds directly to 16S rRNA where it nucleates assembly of the head domain of the 30S subunit. Is located at the subunit interface close to the decoding center, probably blocks exit of the E-site tRNA. This Chlamydia pneumoniae (Chlamydophila pneumoniae) protein is Small ribosomal subunit protein uS7.